The sequence spans 407 residues: Na(+)-translocating NADH-quinone reductase subunit F (407 aa).

The helical transmembrane segment at 3–23 threads the bilayer; the sequence is IILGVVMFTLIVLVLSGLILA. The 2Fe-2S ferredoxin-type domain maps to 32–126; the sequence is GDVVIEINNE…NMKIELPEEI (95 aa). Positions 69, 75, 78, and 110 each coordinate [2Fe-2S] cluster. One can recognise an FAD-binding FR-type domain in the interval 129–269; sequence VKKWECEVIS…SGPFGEFFAK (141 aa).

This sequence belongs to the NqrF family. In terms of assembly, composed of six subunits; NqrA, NqrB, NqrC, NqrD, NqrE and NqrF. [2Fe-2S] cluster is required as a cofactor. It depends on FAD as a cofactor.

The protein localises to the cell inner membrane. The enzyme catalyses a ubiquinone + n Na(+)(in) + NADH + H(+) = a ubiquinol + n Na(+)(out) + NAD(+). Its function is as follows. NQR complex catalyzes the reduction of ubiquinone-1 to ubiquinol by two successive reactions, coupled with the transport of Na(+) ions from the cytoplasm to the periplasm. The first step is catalyzed by NqrF, which accepts electrons from NADH and reduces ubiquinone-1 to ubisemiquinone by a one-electron transfer pathway. The sequence is that of Na(+)-translocating NADH-quinone reductase subunit F from Klebsiella pneumoniae subsp. pneumoniae (strain ATCC 700721 / MGH 78578).